A 485-amino-acid polypeptide reads, in one-letter code: Terminase, large subunit (485 aa).

Residues Gln-97 and Gln-99 each coordinate ATP. The short motif at 124–131 (TSEFRGKS) is the Walker A motif element. Residues 145–150 (FVILDE) carry the Walker B motif motif. The active-site For ATPase activity is the Glu-150. The segment at 256-438 (SNSVFSGLDM…DIVMSLALAY (183 aa)) is nuclease. Residues Asp-294, Asp-347, and Asp-429 each coordinate Mg(2+).

It belongs to the Tequatrovirus large terminase family. Interacts with the terminase small subunit; the active complex is probably heterooligomeric. Interacts with the portal protein. Requires Mg(2+) as cofactor.

Its function is as follows. The terminase large subunit acts as an ATP driven molecular motor necessary for viral DNA translocation into empty capsids and as an endonuclease that cuts the viral genome to initiate and to end a packaging reaction The terminase lies at a unique vertex of the procapsid and is composed of two subunits, a small terminase subunit involved in viral DNA recognition (packaging sequence), and a large terminase subunit possessing endonucleolytic and ATPase activities. Both terminase subunits heterooligomerize and are docked on the portal protein to form the packaging machine. The terminase large subunit exhibits endonuclease activity and cleaves the viral genome concatemer. Once the capsid is packaged with the DNA, the terminase complex is substituted by the tail. This Thermus thermophilus (Thermus thermophilus phage G20c) protein is Terminase, large subunit.